A 182-amino-acid chain; its full sequence is Ribosome maturation factor RimM (182 aa).

Residues 101–182 (VDEYYWSDLK…RIYVNWGVDY (82 aa)) form the PRC barrel domain.

This sequence belongs to the RimM family. Binds ribosomal protein uS19.

Its subcellular location is the cytoplasm. Functionally, an accessory protein needed during the final step in the assembly of 30S ribosomal subunit, possibly for assembly of the head region. Essential for efficient processing of 16S rRNA. May be needed both before and after RbfA during the maturation of 16S rRNA. It has affinity for free ribosomal 30S subunits but not for 70S ribosomes. The sequence is that of Ribosome maturation factor RimM from Acinetobacter baylyi (strain ATCC 33305 / BD413 / ADP1).